We begin with the raw amino-acid sequence, 197 residues long: Methylamine utilization protein MauD (197 aa).

Residues 3–23 traverse the membrane as a helical segment; the sequence is FLIASNILLWIAFLGVTVVML. The Thioredoxin domain occupies 48–180; that stretch reads PDIGDMAPEF…LESLLEADKT (133 aa).

It localises to the membrane. It participates in one-carbon metabolism; methylamine degradation. In terms of biological role, may be specifically involved in the processing, transport, and/or maturation of the MADH beta-subunit. This chain is Methylamine utilization protein MauD (mauD), found in Paracoccus versutus (Thiobacillus versutus).